The chain runs to 171 residues: UPF0303 protein YPN_2129 (171 aa).

Belongs to the UPF0303 family.

This Yersinia pestis bv. Antiqua (strain Nepal516) protein is UPF0303 protein YPN_2129.